The primary structure comprises 273 residues: Glutamate racemase (273 aa).

Residues 17 to 18 and 49 to 50 each bind substrate; these read DS and YG. C80 acts as the Proton donor/acceptor in catalysis. 81-82 provides a ligand contact to substrate; sequence NT. C190 (proton donor/acceptor) is an active-site residue. 191-192 serves as a coordination point for substrate; the sequence is TH.

It belongs to the aspartate/glutamate racemases family.

The enzyme catalyses L-glutamate = D-glutamate. The protein operates within cell wall biogenesis; peptidoglycan biosynthesis. Functionally, provides the (R)-glutamate required for cell wall biosynthesis. This chain is Glutamate racemase, found in Corynebacterium glutamicum (strain ATCC 13032 / DSM 20300 / JCM 1318 / BCRC 11384 / CCUG 27702 / LMG 3730 / NBRC 12168 / NCIMB 10025 / NRRL B-2784 / 534).